The primary structure comprises 577 residues: 2-succinyl-5-enolpyruvyl-6-hydroxy-3-cyclohexene-1-carboxylate synthase (577 aa).

The protein belongs to the TPP enzyme family. MenD subfamily. As to quaternary structure, homodimer. It depends on Mg(2+) as a cofactor. Mn(2+) serves as cofactor. The cofactor is thiamine diphosphate.

The enzyme catalyses isochorismate + 2-oxoglutarate + H(+) = 5-enolpyruvoyl-6-hydroxy-2-succinyl-cyclohex-3-ene-1-carboxylate + CO2. It functions in the pathway quinol/quinone metabolism; 1,4-dihydroxy-2-naphthoate biosynthesis; 1,4-dihydroxy-2-naphthoate from chorismate: step 2/7. The protein operates within quinol/quinone metabolism; menaquinone biosynthesis. In terms of biological role, catalyzes the thiamine diphosphate-dependent decarboxylation of 2-oxoglutarate and the subsequent addition of the resulting succinic semialdehyde-thiamine pyrophosphate anion to isochorismate to yield 2-succinyl-5-enolpyruvyl-6-hydroxy-3-cyclohexene-1-carboxylate (SEPHCHC). This Christiangramia forsetii (strain DSM 17595 / CGMCC 1.15422 / KT0803) (Gramella forsetii) protein is 2-succinyl-5-enolpyruvyl-6-hydroxy-3-cyclohexene-1-carboxylate synthase.